A 432-amino-acid chain; its full sequence is MCACAVAGVAVSSLVVPTAESGEMKTKATAPVPQPGPIRKLARKKAKKKFRKSKALAGSGVPGSHPAAVAGRPPKAPENFSQNWKALQELLKQKSQAAEKPLVSQMDDKMHPQIIQQNRKKASDKSKGDKQRTEKAKSTRGSVTSAPTDRKILVPPTDTSGTEQKKGAKKRTYSDISSHQGALKPKWKATEAAVILNQPTPTEEDIWFDDVDPDDIEDAIGPEAAMLVRKRLGQKKRTISLEKEQAFGGLTKALALDCEMVGVGPKGEESIAARVSIVNQYGKCVYDKYVKPTEPVTDYRTAVSGIRPENLKQGEEFEVVKKEVAEMLKGRILVGHALHNDLKVLFLDHPKKKIRDTQKFKPFRSRVKSGRPSLKRLSEKILGIRVQQAEHCSIQDAQAAMRLYVMVKREWESSTANRRAPAATPQHRIKNS.

Positions 42-54 are enriched in basic residues; the sequence is ARKKAKKKFRKSK. Residues 42-177 form a disordered region; sequence ARKKAKKKFR…AKKRTYSDIS (136 aa). Residues 121-137 are compositionally biased toward basic and acidic residues; sequence KASDKSKGDKQRTEKAK. Ser-123 bears the Phosphoserine mark. Lys-127 is covalently cross-linked (Glycyl lysine isopeptide (Lys-Gly) (interchain with G-Cter in SUMO2)). The Exonuclease domain maps to 230–381; it reads KRLGQKKRTI…PSLKRLSEKI (152 aa).

It belongs to the REXO4 family. In terms of assembly, can bind ESR1 and ESR2. This interaction is abrogated by estrogen and augmented by tamoxifen treatment.

It localises to the nucleus. The protein resides in the nucleolus. Functionally, may function as an exonuclease. This chain is RNA exonuclease 4 (Rexo4), found in Mus musculus (Mouse).